The sequence spans 905 residues: Catenin alpha-2 (905 aa).

Thr632 carries the phosphothreonine modification. 3 positions are modified to phosphoserine: Ser640, Ser651, and Ser853. The span at 869–879 shows a compositional bias: basic and acidic residues; that stretch reads VKREKPEEFQT. The interval 869 to 891 is disordered; it reads VKREKPEEFQTRVRRGSQKKHIS. Residues 880 to 890 are compositionally biased toward basic residues; the sequence is RVRRGSQKKHI. Ser891 carries the phosphoserine modification.

It belongs to the vinculin/alpha-catenin family. In terms of assembly, interacts with CDH1 and CDH2. Interacts with ZNF639; recruits CTNNA2 to the nucleus. Interacts with F-actin.

It localises to the cell membrane. It is found in the cytoplasm. The protein resides in the cytoskeleton. Its subcellular location is the cell junction. The protein localises to the adherens junction. It localises to the cell projection. It is found in the axon. The protein resides in the nucleus. In terms of biological role, may function as a linker between cadherin adhesion receptors and the cytoskeleton to regulate cell-cell adhesion and differentiation in the nervous system. Required for proper regulation of cortical neuronal migration and neurite growth. It acts as a negative regulator of Arp2/3 complex activity and Arp2/3-mediated actin polymerization. It thereby suppresses excessive actin branching which would impair neurite growth and stability. Regulates morphological plasticity of synapses and cerebellar and hippocampal lamination during development. Functions in the control of startle modulation. In Pongo abelii (Sumatran orangutan), this protein is Catenin alpha-2 (CTNNA2).